A 178-amino-acid polypeptide reads, in one-letter code: Inner membrane-spanning protein YciB (178 aa).

Transmembrane regions (helical) follow at residues Ile-22 to Tyr-42, Met-50 to Asn-70, Trp-76 to Met-96, Ile-121 to Leu-141, and Phe-149 to Ile-169.

Belongs to the YciB family.

Its subcellular location is the cell inner membrane. Functionally, plays a role in cell envelope biogenesis, maintenance of cell envelope integrity and membrane homeostasis. This Cronobacter sakazakii (strain ATCC BAA-894) (Enterobacter sakazakii) protein is Inner membrane-spanning protein YciB.